A 197-amino-acid chain; its full sequence is Ribonuclease HII (197 aa).

The RNase H type-2 domain maps to 14 to 197 (GIIAGVDEVG…RKNFAPIRIL (184 aa)). A divalent metal cation contacts are provided by D20, E21, and D112.

This sequence belongs to the RNase HII family. The cofactor is Mn(2+). It depends on Mg(2+) as a cofactor.

The protein resides in the cytoplasm. The catalysed reaction is Endonucleolytic cleavage to 5'-phosphomonoester.. Endonuclease that specifically degrades the RNA of RNA-DNA hybrids. This Wolbachia pipientis subsp. Culex pipiens (strain wPip) protein is Ribonuclease HII.